The sequence spans 94 residues: 2S albumin-like cysteine protease inhibitor (94 aa).

3 disulfide bridges follow: Cys12-Cys35, Cys36-Cys82, and Cys48-Cys89.

This sequence belongs to the 2S seed storage albumins family. As to expression, expressed in seeds (at protein level).

Cysteine protease inhibitor that likely functions in defense against insects by inhibiting cysteine proteases in the midgut of herbivore insects such as C.maculatus. Selectively inhibits cathepsin L, as well as papain, ficin and bromelain with lower efficiency. Shows antitumor activity, inhibiting the growth of prostate cancer cell lines PC3 and DU145, and the gastric cancer cell line Hs746T. No activity against cathepsin B or serine proteases (trypsin, human plasma kallikrein and elastase). The polypeptide is 2S albumin-like cysteine protease inhibitor (Araucaria angustifolia (Brazilian pine tree)).